A 151-amino-acid chain; its full sequence is 3-hydroxyacyl-[acyl-carrier-protein] dehydratase FabZ (151 aa).

Residue His-57 is part of the active site.

This sequence belongs to the thioester dehydratase family. FabZ subfamily.

The protein resides in the cytoplasm. It catalyses the reaction a (3R)-hydroxyacyl-[ACP] = a (2E)-enoyl-[ACP] + H2O. Functionally, involved in unsaturated fatty acids biosynthesis. Catalyzes the dehydration of short chain beta-hydroxyacyl-ACPs and long chain saturated and unsaturated beta-hydroxyacyl-ACPs. This chain is 3-hydroxyacyl-[acyl-carrier-protein] dehydratase FabZ, found in Prochlorococcus marinus (strain SARG / CCMP1375 / SS120).